Consider the following 264-residue polypeptide: uncharacterized protein (264 aa).

Transmembrane regions (helical) follow at residues 23–43 (LIFL…TALI), 59–79 (FDTF…YYFL), 91–111 (LVLS…FYAL), 150–170 (FSEL…VGLL), 190–210 (AGIY…LNVW), and 233–253 (WIWS…LFVI).

It is found in the cell membrane. This is an uncharacterized protein from Mycoplasma genitalium (strain ATCC 33530 / DSM 19775 / NCTC 10195 / G37) (Mycoplasmoides genitalium).